We begin with the raw amino-acid sequence, 248 residues long: DCN1-like protein 4 (248 aa).

Residues 1-35 (MPRGKRRAADTISDNMDHGQPKRARTSYTSIPTQQ) form a disordered region. Positions 26 to 35 (TSYTSIPTQQ) are enriched in polar residues. One can recognise a DCUN1 domain in the interval 47–235 (FSQKRCMAWF…MLDEFVEWLR (189 aa)).

It is found in the nucleus. Inhibits neddylation of cullin components of SCF-type E3 ubiquitin ligase complexes and thus regulates SCF-type complex activity. Essential for development. Function inhibits cell proliferation and cell growth. The protein is DCN1-like protein 4 of Drosophila melanogaster (Fruit fly).